The chain runs to 111 residues: Large ribosomal subunit protein uL22 (111 aa).

It belongs to the universal ribosomal protein uL22 family. In terms of assembly, part of the 50S ribosomal subunit.

Functionally, this protein binds specifically to 23S rRNA; its binding is stimulated by other ribosomal proteins, e.g. L4, L17, and L20. It is important during the early stages of 50S assembly. It makes multiple contacts with different domains of the 23S rRNA in the assembled 50S subunit and ribosome. In terms of biological role, the globular domain of the protein is located near the polypeptide exit tunnel on the outside of the subunit, while an extended beta-hairpin is found that lines the wall of the exit tunnel in the center of the 70S ribosome. This chain is Large ribosomal subunit protein uL22, found in Chlamydia trachomatis serovar A (strain ATCC VR-571B / DSM 19440 / HAR-13).